The chain runs to 92 residues: Signal recognition particle 19 kDa protein (92 aa).

This sequence belongs to the SRP19 family. Part of the signal recognition particle protein translocation system, which is composed of SRP and FtsY. Archaeal SRP consists of a 7S RNA molecule of 300 nucleotides and two protein subunits: SRP54 and SRP19.

The protein resides in the cytoplasm. Its function is as follows. Involved in targeting and insertion of nascent membrane proteins into the cytoplasmic membrane. Binds directly to 7S RNA and mediates binding of the 54 kDa subunit of the SRP. This chain is Signal recognition particle 19 kDa protein, found in Haloferax volcanii (strain ATCC 29605 / DSM 3757 / JCM 8879 / NBRC 14742 / NCIMB 2012 / VKM B-1768 / DS2) (Halobacterium volcanii).